A 108-amino-acid chain; its full sequence is Nucleoid-associated protein Avin_19840 (108 aa).

This sequence belongs to the YbaB/EbfC family. As to quaternary structure, homodimer.

Its subcellular location is the cytoplasm. The protein localises to the nucleoid. Its function is as follows. Binds to DNA and alters its conformation. May be involved in regulation of gene expression, nucleoid organization and DNA protection. This is Nucleoid-associated protein Avin_19840 from Azotobacter vinelandii (strain DJ / ATCC BAA-1303).